A 548-amino-acid chain; its full sequence is Protoporphyrinogen oxidase, chloroplastic (548 aa).

The transit peptide at 1–50 (MTTTPIANHPNIFTHQSSSSPLAFLNRTSFIPFSSISKRNSVNCNGWRTR) directs the protein to the chloroplast. Residues 78–83 (GAGISG), 101–102 (EA), and 123–126 (GPNS) contribute to the FAD site. Over residues 265–279 (KERSSTPKAPRDPRL) the composition is skewed to basic and acidic residues. The disordered stretch occupies residues 265 to 287 (KERSSTPKAPRDPRLPKPKGQTV). Position 522 to 524 (522 to 524 (VAL)) interacts with FAD.

This sequence belongs to the protoporphyrinogen/coproporphyrinogen oxidase family. Protoporphyrinogen oxidase subfamily. In terms of assembly, homodimer. FAD serves as cofactor.

It localises to the plastid. The protein resides in the chloroplast. It catalyses the reaction protoporphyrinogen IX + 3 O2 = protoporphyrin IX + 3 H2O2. It participates in porphyrin-containing compound metabolism; protoporphyrin-IX biosynthesis; protoporphyrin-IX from protoporphyrinogen-IX: step 1/1. It functions in the pathway porphyrin-containing compound metabolism; chlorophyll biosynthesis. In terms of biological role, catalyzes the 6-electron oxidation of protoporphyrinogen-IX to form protoporphyrin-IX. The chain is Protoporphyrinogen oxidase, chloroplastic (PPXI) from Nicotiana tabacum (Common tobacco).